Consider the following 194-residue polypeptide: Erythropoietin (194 aa).

An N-terminal signal peptide occupies residues 1–27; the sequence is MGARDCTPLLLLLLSFLLFPLGLPVLG. 2 cysteine pairs are disulfide-bonded: C34–C189 and C56–C60. N51 carries N-linked (GlcNAc...) asparagine glycosylation. N65 and N110 each carry an N-linked (GlcNAc...) asparagine glycan.

It belongs to the EPO/TPO family. Produced by kidney or liver of adult mammals and by liver of fetal or neonatal mammals.

The protein localises to the secreted. In terms of biological role, hormone involved in the regulation of erythrocyte proliferation and differentiation and the maintenance of a physiological level of circulating erythrocyte mass. Binds to EPOR leading to EPOR dimerization and JAK2 activation thereby activating specific downstream effectors, including STAT1 and STAT3. The protein is Erythropoietin (EPO) of Ovis aries (Sheep).